We begin with the raw amino-acid sequence, 194 residues long: Phosphoheptose isomerase (194 aa).

One can recognise an SIS domain in the interval 37–194 (IADTFKAGGK…LIEKEMVAQG (158 aa)). 52-54 (NGG) contacts substrate. Zn(2+)-binding residues include His-61 and Glu-65. Residues Glu-65, 93–94 (ND), 119–121 (STS), Ser-124, and Gln-172 each bind substrate. 2 residues coordinate Zn(2+): Gln-172 and His-180.

The protein belongs to the SIS family. GmhA subfamily. Homotetramer. Zn(2+) is required as a cofactor.

The protein localises to the cytoplasm. It catalyses the reaction 2 D-sedoheptulose 7-phosphate = D-glycero-alpha-D-manno-heptose 7-phosphate + D-glycero-beta-D-manno-heptose 7-phosphate. It participates in carbohydrate biosynthesis; D-glycero-D-manno-heptose 7-phosphate biosynthesis; D-glycero-alpha-D-manno-heptose 7-phosphate and D-glycero-beta-D-manno-heptose 7-phosphate from sedoheptulose 7-phosphate: step 1/1. Catalyzes the isomerization of sedoheptulose 7-phosphate in D-glycero-D-manno-heptose 7-phosphate. The protein is Phosphoheptose isomerase of Sodalis glossinidius (strain morsitans).